Here is a 258-residue protein sequence, read N- to C-terminus: Flagellar brake protein YcgR (258 aa).

The PilZ domain occupies 131–248 (QKREYYRVAT…ALSLIQRYIT (118 aa)).

It belongs to the YcgR family. Monomer. Interacts with the flagellar basal bodies.

Its subcellular location is the bacterial flagellum basal body. Its function is as follows. Acts as a flagellar brake, regulating swimming and swarming in a bis-(3'-5') cyclic diguanylic acid (c-di-GMP)-dependent manner. Binds 1 c-di-GMP dimer per subunit. Increasing levels of c-di-GMP lead to decreased motility. This chain is Flagellar brake protein YcgR, found in Nitrosospira multiformis (strain ATCC 25196 / NCIMB 11849 / C 71).